A 193-amino-acid chain; its full sequence is Alpha-S2-casein (193 aa).

The signal sequence occupies residues 1-15 (MKFFIFTCLLAVVLA). Phosphoserine occurs at positions 23, 24, 25, 28, 47, 68, 123, 125, 128, and 136.

This sequence belongs to the alpha-casein family. As to expression, mammary gland specific. Secreted in milk.

Its subcellular location is the secreted. Its function is as follows. Important role in the capacity of milk to transport calcium phosphate. This chain is Alpha-S2-casein (CSN1S2), found in Camelus dromedarius (Dromedary).